A 161-amino-acid polypeptide reads, in one-letter code: Ribonuclease P protein component 2 (161 aa).

The protein belongs to the eukaryotic/archaeal RNase P protein component 2 family. In terms of assembly, consists of a catalytic RNA component and at least 4-5 protein subunits.

The protein resides in the cytoplasm. It catalyses the reaction Endonucleolytic cleavage of RNA, removing 5'-extranucleotides from tRNA precursor.. Functionally, part of ribonuclease P, a protein complex that generates mature tRNA molecules by cleaving their 5'-ends. This is Ribonuclease P protein component 2 from Methanopyrus kandleri (strain AV19 / DSM 6324 / JCM 9639 / NBRC 100938).